The chain runs to 312 residues: Light-independent protochlorophyllide reductase iron-sulfur ATP-binding protein (312 aa).

ATP contacts are provided by residues glycine 55–threonine 60 and lysine 84. A Mg(2+)-binding site is contributed by serine 59. Residues cysteine 140 and cysteine 174 each coordinate [4Fe-4S] cluster. Residues asparagine 225–arginine 226 and proline 249–leucine 251 each bind ATP.

This sequence belongs to the NifH/BchL/ChlL family. In terms of assembly, homodimer. Protochlorophyllide reductase is composed of three subunits; BchL, BchN and BchB. [4Fe-4S] cluster serves as cofactor.

It carries out the reaction chlorophyllide a + oxidized 2[4Fe-4S]-[ferredoxin] + 2 ADP + 2 phosphate = protochlorophyllide a + reduced 2[4Fe-4S]-[ferredoxin] + 2 ATP + 2 H2O. The protein operates within porphyrin-containing compound metabolism; bacteriochlorophyll biosynthesis (light-independent). In terms of biological role, component of the dark-operative protochlorophyllide reductase (DPOR) that uses Mg-ATP and reduced ferredoxin to reduce ring D of protochlorophyllide (Pchlide) to form chlorophyllide a (Chlide). This reaction is light-independent. The L component serves as a unique electron donor to the NB-component of the complex, and binds Mg-ATP. The polypeptide is Light-independent protochlorophyllide reductase iron-sulfur ATP-binding protein (Rhodopseudomonas palustris (strain ATCC BAA-98 / CGA009)).